The following is a 206-amino-acid chain: LexA repressor (206 aa).

The H-T-H motif DNA-binding region spans 28–48; sequence RAEIARELGFRSANAAEEHLK. Catalysis depends on for autocatalytic cleavage activity residues Ser123 and Lys160.

This sequence belongs to the peptidase S24 family. In terms of assembly, homodimer.

It catalyses the reaction Hydrolysis of Ala-|-Gly bond in repressor LexA.. In terms of biological role, represses a number of genes involved in the response to DNA damage (SOS response), including recA and lexA. In the presence of single-stranded DNA, RecA interacts with LexA causing an autocatalytic cleavage which disrupts the DNA-binding part of LexA, leading to derepression of the SOS regulon and eventually DNA repair. The chain is LexA repressor from Vibrio parahaemolyticus serotype O3:K6 (strain RIMD 2210633).